Reading from the N-terminus, the 529-residue chain is uncharacterized protein (529 aa).

ATP-binding positions include 178–186 (TSGTTGQPK), Asp401, Arg416, and Lys510.

This sequence belongs to the ATP-dependent AMP-binding enzyme family.

This is an uncharacterized protein from Bacillus subtilis (strain 168).